The chain runs to 91 residues: Small ribosomal subunit protein uS19 (91 aa).

The protein belongs to the universal ribosomal protein uS19 family.

Protein S19 forms a complex with S13 that binds strongly to the 16S ribosomal RNA. The polypeptide is Small ribosomal subunit protein uS19 (Exiguobacterium sp. (strain ATCC BAA-1283 / AT1b)).